The following is a 39-amino-acid chain: Osmotin-like protein (39 aa).

The protein belongs to the thaumatin family. Contains intrachain disulfide bonds.

In terms of biological role, may be an important antifungal protein. The polypeptide is Osmotin-like protein (Hevea brasiliensis (Para rubber tree)).